We begin with the raw amino-acid sequence, 279 residues long: Zinc-finger homeodomain protein 1 (279 aa).

Positions 1-30 are enriched in acidic residues; it reads MEFEDNNNNNDEEQEEDMNLHEEEEDDDAV. A disordered region spans residues 1 to 62; the sequence is MEFEDNNNNN…TTSTGGGGGF (62 aa). A ZF-HD dimerization-type zinc finger spans residues 75-124; the sequence is FRECLKNQAVNIGGHAVDGCGEFMPAGIEGTIDALKCAACGCHRNFHRKE. Disordered regions lie at residues 128 to 199 and 245 to 279; these read FHHA…TKFT and NNKHTLGKSPSPLHHHQAPPPPPPQSSFHHEQDQP. A compositionally biased stretch (pro residues) spans 134 to 143; it reads QHQPPPPPPG. A DNA-binding region (homeobox; atypical) is located at residues 191–254; it reads RKRHRTKFTA…NNKHTLGKSP (64 aa).

As to quaternary structure, homo- and heterodimer with other ZFHD proteins. Interacts with MIF1 and MIF2; these interactions prevent nuclear localization and DNA-binding to inhibit transcription regulation activity. Binds to ZHD2, ZHD3, ZHD4, ZHD5, ZHD6, ZHD7, ZHD8, ZHD9, ZHD10 and ZHD11. In terms of tissue distribution, mostly expressed in flowers and inflorescence.

It localises to the nucleus. Putative transcription factor. The polypeptide is Zinc-finger homeodomain protein 1 (ZHD1) (Arabidopsis thaliana (Mouse-ear cress)).